The primary structure comprises 159 residues: Alpha-lactalbumin (159 aa).

The N-terminal stretch at 1–19 (MMRFVPLFLACISLPAFQA) is a signal peptide. Positions 20-142 (TEFTKCEVSH…KLEQWRCEKP (123 aa)) constitute a C-type lysozyme domain. Disulfide bonds link Cys-25–Cys-139, Cys-47–Cys-130, Cys-80–Cys-96, and Cys-92–Cys-110. Residue Asn-64 is glycosylated (N-linked (GlcNAc...) asparagine). Residues Lys-98, Asp-101, Asp-106, and Asp-107 each coordinate Ca(2+).

This sequence belongs to the glycosyl hydrolase 22 family. Lactose synthase (LS) is a heterodimer of a catalytic component, beta1,4-galactosyltransferase (beta4Gal-T1) and a regulatory component, alpha-lactalbumin (LA). As to expression, mammary gland specific. Secreted in milk.

Its subcellular location is the secreted. Functionally, regulatory subunit of lactose synthase, changes the substrate specificity of galactosyltransferase in the mammary gland making glucose a good acceptor substrate for this enzyme. This enables LS to synthesize lactose, the major carbohydrate component of milk. In other tissues, galactosyltransferase transfers galactose onto the N-acetylglucosamine of the oligosaccharide chains in glycoproteins. This is Alpha-lactalbumin (Lalba) from Rattus norvegicus (Rat).